Consider the following 62-residue polypeptide: Large ribosomal subunit protein bL28 (62 aa).

This sequence belongs to the bacterial ribosomal protein bL28 family.

The polypeptide is Large ribosomal subunit protein bL28 (Acetivibrio thermocellus (strain ATCC 27405 / DSM 1237 / JCM 9322 / NBRC 103400 / NCIMB 10682 / NRRL B-4536 / VPI 7372) (Clostridium thermocellum)).